The chain runs to 600 residues: Elongation factor 4 (600 aa).

The 183-residue stretch at 7 to 189 (SLIRNFSIIA…ALVQRLPAPT (183 aa)) folds into the tr-type G domain. Residues 19–24 (DHGKST) and 136–139 (NKID) each bind GTP.

Belongs to the TRAFAC class translation factor GTPase superfamily. Classic translation factor GTPase family. LepA subfamily.

The protein localises to the cell inner membrane. It carries out the reaction GTP + H2O = GDP + phosphate + H(+). Its function is as follows. Required for accurate and efficient protein synthesis under certain stress conditions. May act as a fidelity factor of the translation reaction, by catalyzing a one-codon backward translocation of tRNAs on improperly translocated ribosomes. Back-translocation proceeds from a post-translocation (POST) complex to a pre-translocation (PRE) complex, thus giving elongation factor G a second chance to translocate the tRNAs correctly. Binds to ribosomes in a GTP-dependent manner. The sequence is that of Elongation factor 4 from Gluconobacter oxydans (strain 621H) (Gluconobacter suboxydans).